A 399-amino-acid polypeptide reads, in one-letter code: 1-deoxy-D-xylulose 5-phosphate reductoisomerase (399 aa).

NADPH is bound by residues T13, G14, S15, I16, and N127. K128 provides a ligand contact to 1-deoxy-D-xylulose 5-phosphate. NADPH is bound at residue E129. Residue D153 participates in Mn(2+) binding. Residues S154, E155, S187, and H210 each contribute to the 1-deoxy-D-xylulose 5-phosphate site. E155 contacts Mn(2+). Position 216 (G216) interacts with NADPH. 1-deoxy-D-xylulose 5-phosphate is bound by residues S223, N228, K229, and E232. E232 contacts Mn(2+).

This sequence belongs to the DXR family. Mg(2+) is required as a cofactor. Mn(2+) serves as cofactor.

The enzyme catalyses 2-C-methyl-D-erythritol 4-phosphate + NADP(+) = 1-deoxy-D-xylulose 5-phosphate + NADPH + H(+). Its pathway is isoprenoid biosynthesis; isopentenyl diphosphate biosynthesis via DXP pathway; isopentenyl diphosphate from 1-deoxy-D-xylulose 5-phosphate: step 1/6. In terms of biological role, catalyzes the NADPH-dependent rearrangement and reduction of 1-deoxy-D-xylulose-5-phosphate (DXP) to 2-C-methyl-D-erythritol 4-phosphate (MEP). This Bordetella avium (strain 197N) protein is 1-deoxy-D-xylulose 5-phosphate reductoisomerase.